Reading from the N-terminus, the 309-residue chain is Short-chain dehydrogenase/reductase ARMGADRAFT_1018437 (309 aa).

Positions 64, 86, and 113 each coordinate NADP(+). The active-site Proton donor is S167. NADP(+)-binding residues include Y196 and K200. The active-site Proton acceptor is Y196. The active-site Lowers pKa of active site Tyr is K200.

Belongs to the short-chain dehydrogenases/reductases (SDR) family.

Its pathway is secondary metabolite biosynthesis. Functionally, short-chain dehydrogenase/reductase, part of the gene cluster that mediates the biosynthesis of melleolides, a range of antifungal and phytotoxic polyketide derivatives composed of an orsellinic acid (OA) moiety esterified to various sesquiterpene alcohols. The first step in melleolides biosynthesis is performed by the delta(6)-protoilludene synthase PRO1 which catalyzes the cyclization of farnesyl diphosphate to protoilludene. The orsellinic acid synthase armB produces OA by condensing acetyl-CoA with 3 malonyl-CoA units in a three-round chain elongation reaction folowed by a C2-C7 ring closure. ArmB further catalyzes the trans-esterification of OA to the various sesquiterpene alcohols resulting from the hydroxylation of protoilludene. The melleolides cluster also includes 5 cytochrome P450 monooxygenases, 4 NAD(+)-dependent oxidoreductases, one flavin-dependent oxidoreductase, and one O-methyltransferase. The cytochrome P450 monooxygenases may be involved in protoilludene hydroxylation to elaborate melleolides with multiple alcohol groups, such as melleolide D, which carries alcohol functionalities at C-4, C-5, C-10, and C-13. The role of the NAD(+)-dependent enzymes remains unknown. Numerous melleolides, including arnamial, show 5'-O-methylation of the aromatic moiety which may be catalyzed by the methyltransferase encoded in the cluster. The flavin-dependent oxidoreductase might represent the dehydrogenase yielding the aldehyde in position 1 of arnamial and other melleolides. Finally, several halogenase localized outside of the cluster, are able to catalyze the transfer of a single chlorine atom to the melleolide backbone, resulting in a 6'-chloromelleolide product. The chain is Short-chain dehydrogenase/reductase ARMGADRAFT_1018437 from Armillaria gallica (Bulbous honey fungus).